A 533-amino-acid polypeptide reads, in one-letter code: Atypical kinase COQ8B, mitochondrial (533 aa).

A helical membrane pass occupies residues 93 to 109; it reads LASFGGLAVGLGLGALA. The KxGQ motif motif lies at 156–159; that stretch reads KIGQ. One can recognise a Protein kinase domain in the interval 192–424; that stretch reads MMRVLEEELG…DRVLQKSQDL (233 aa). An AAAS motif motif is present at residues 217–220; sequence AAAS. ATP-binding positions include Ser220, Lys238, and 325-328; that span reads MELA. Asp368 acts as the Proton acceptor in catalysis. ATP-binding residues include Asn373 and Asp387.

The protein belongs to the protein kinase superfamily. ADCK protein kinase family. Homodimer; homodimerizes via its transmembrane region. Interacts with COQ6 and COQ7. Interacts with the multi-subunit COQ enzyme complex, composed of at least COQ3, COQ4, COQ5, COQ6, COQ7 and COQ9.

It is found in the mitochondrion membrane. The protein localises to the cytoplasm. It localises to the cytosol. The protein resides in the cell membrane. The protein operates within cofactor biosynthesis; ubiquinone biosynthesis. Functionally, atypical kinase involved in the biosynthesis of coenzyme Q, also named ubiquinone, an essential lipid-soluble electron transporter for aerobic cellular respiration. Its substrate specificity is still unclear: may act as a protein kinase that mediates phosphorylation of COQ3. According to other reports, acts as a small molecule kinase, possibly a lipid kinase that phosphorylates a prenyl lipid in the ubiquinone biosynthesis pathway, as suggested by its ability to bind coenzyme Q lipid intermediates. However, the small molecule kinase activity was not confirmed by another publication. Required for podocyte migration. This is Atypical kinase COQ8B, mitochondrial from Mus musculus (Mouse).